A 180-amino-acid chain; its full sequence is Large ribosomal subunit protein uL6 (180 aa).

Belongs to the universal ribosomal protein uL6 family. As to quaternary structure, part of the 50S ribosomal subunit.

In terms of biological role, this protein binds to the 23S rRNA, and is important in its secondary structure. It is located near the subunit interface in the base of the L7/L12 stalk, and near the tRNA binding site of the peptidyltransferase center. In Salinispora tropica (strain ATCC BAA-916 / DSM 44818 / JCM 13857 / NBRC 105044 / CNB-440), this protein is Large ribosomal subunit protein uL6.